The sequence spans 62 residues: UPF0434 protein Rpic_2808 (62 aa).

This sequence belongs to the UPF0434 family.

The protein is UPF0434 protein Rpic_2808 of Ralstonia pickettii (strain 12J).